A 410-amino-acid polypeptide reads, in one-letter code: Cysteine desulfurase IscS (410 aa).

Residues 80–81, N160, Q188, and 208–210 each bind pyridoxal 5'-phosphate; these read AT and SGH. K211 carries the post-translational modification N6-(pyridoxal phosphate)lysine. Residue T248 coordinates pyridoxal 5'-phosphate. The active-site Cysteine persulfide intermediate is C334. C334 contacts [2Fe-2S] cluster.

Belongs to the class-V pyridoxal-phosphate-dependent aminotransferase family. NifS/IscS subfamily. In terms of assembly, homodimer. Forms a heterotetramer with IscU, interacts with other sulfur acceptors. Pyridoxal 5'-phosphate is required as a cofactor.

The protein localises to the cytoplasm. The enzyme catalyses (sulfur carrier)-H + L-cysteine = (sulfur carrier)-SH + L-alanine. The protein operates within cofactor biosynthesis; iron-sulfur cluster biosynthesis. Its function is as follows. Master enzyme that delivers sulfur to a number of partners involved in Fe-S cluster assembly, tRNA modification or cofactor biosynthesis. Catalyzes the removal of elemental sulfur atoms from cysteine to produce alanine. Functions as a sulfur delivery protein for Fe-S cluster synthesis onto IscU, an Fe-S scaffold assembly protein, as well as other S acceptor proteins. The chain is Cysteine desulfurase IscS from Rickettsia massiliae (strain Mtu5).